We begin with the raw amino-acid sequence, 301 residues long: Sulfate adenylyltransferase subunit 2 1 (301 aa).

It belongs to the PAPS reductase family. CysD subfamily. Heterodimer composed of CysD, the smaller subunit, and CysN.

The enzyme catalyses sulfate + ATP + H(+) = adenosine 5'-phosphosulfate + diphosphate. The protein operates within sulfur metabolism; hydrogen sulfide biosynthesis; sulfite from sulfate: step 1/3. Functionally, with CysN forms the ATP sulfurylase (ATPS) that catalyzes the adenylation of sulfate producing adenosine 5'-phosphosulfate (APS) and diphosphate, the first enzymatic step in sulfur assimilation pathway. APS synthesis involves the formation of a high-energy phosphoric-sulfuric acid anhydride bond driven by GTP hydrolysis by CysN coupled to ATP hydrolysis by CysD. This Shewanella sediminis (strain HAW-EB3) protein is Sulfate adenylyltransferase subunit 2 1.